Here is a 75-residue protein sequence, read N- to C-terminus: Carwaprin-a (75 aa).

An N-terminal signal peptide occupies residues 1–24; it reads MSSGGLLLLLGLLTLWAELTPISG. Residues 27–72 form the WAP domain; the sequence is RPKKPGLCPPRPQKPPCVRECKNDWRCPGEQKCCRYGCIYECRDPI. 4 disulfide bridges follow: C34-C60, C43-C64, C47-C59, and C53-C68.

Belongs to the venom waprin family. As to expression, expressed by the venom gland.

The protein resides in the secreted. Damages membranes of susceptible bacteria. Has no hemolytic activity. Not toxic to mice. Does not inhibit the proteinases elastase and cathepsin G. This chain is Carwaprin-a, found in Tropidechis carinatus (Australian rough-scaled snake).